A 309-amino-acid polypeptide reads, in one-letter code: Succinate dehydrogenase [ubiquinone] iron-sulfur subunit 3, mitochondrial (309 aa).

The N-terminal 22 residues, 1 to 22 (MSSVLRLLGRRICNPAAEKVRL), are a transit peptide targeting the mitochondrion. The region spanning 69–160 (FKIYRWNPDK…PTIITPLPHM (92 aa)) is the 2Fe-2S ferredoxin-type domain. The [2Fe-2S] cluster site is built by Cys-120, Cys-125, and Cys-140. Residues 202-232 (DRKKLDGLYECILCACCTTSCPSYWWNPEEF) enclose the 4Fe-4S ferredoxin-type domain. [4Fe-4S] cluster contacts are provided by Cys-212, Cys-215, and Cys-218. Cys-222 contacts [3Fe-4S] cluster. An a ubiquinone-binding site is contributed by Trp-227. Positions 270 and 276 each coordinate [3Fe-4S] cluster. Cys-280 contributes to the [4Fe-4S] cluster binding site.

It belongs to the succinate dehydrogenase/fumarate reductase iron-sulfur protein family. As to quaternary structure, component of complex II composed of eight subunits in plants: four classical SDH subunits SDH1, SDH2, SDH3 and SDH4 (a flavoprotein (FP), an iron-sulfur protein (IP), and a cytochrome b composed of a large and a small subunit.), as well as four subunits unknown in mitochondria from bacteria and heterotrophic eukaryotes. The cofactor is [2Fe-2S] cluster. [3Fe-4S] cluster is required as a cofactor. It depends on [4Fe-4S] cluster as a cofactor.

The protein localises to the mitochondrion inner membrane. It catalyses the reaction a quinone + succinate = fumarate + a quinol. It functions in the pathway carbohydrate metabolism; tricarboxylic acid cycle; fumarate from succinate (eukaryal route): step 1/1. In terms of biological role, iron-sulfur protein (IP) subunit of succinate dehydrogenase (SDH) that is involved in complex II of the mitochondrial electron transport chain and is responsible for transferring electrons from succinate to ubiquinone (coenzyme Q). This Arabidopsis thaliana (Mouse-ear cress) protein is Succinate dehydrogenase [ubiquinone] iron-sulfur subunit 3, mitochondrial (SDH2-3).